An 804-amino-acid chain; its full sequence is MSLETSTTTPAGSPLSDRELDLIDKYWRAANYLSVGQIYLLDNPLLKEPLSAEHVKPRLLGHWGTTPGLNLVYAHLNRIIRNRDADVIYVTGPGHGGPGLVANAYLEGTYSEVYTGIEEDAEGLRKLFRQFSFPGGIPSHVAAQTPGSIHEGGELGYALVHAYGAAFDNPYLVVACVIGDGEAETGPLAAGWHSNKFLNPVTDGAVLPILALNGYKIANPTVLARIPHTELEALLRGYGYRPITVAGDDPTDVHRQLAAALDEAFDDIAAIQGVARGGGEVQRPVWPMIVLRTPKGWTGPKVVDGKRVEGTWRSHQVPLAETHDNPEHRAQLEEWLRSYGPEQLFDDDGRLRAELRALAPTGDRRMSANPHANGGLLLHDLDLPDFRDYAVPVTRPGSVTHEATRVLGTFLRDVIARNKDRFRMMGPDETASNRLDAVYGATEKVWLSATEPDDEHLAPDGRVMEVLSEHLCQGWLEGYLLTGRHGLFNCYEAFVHIVDSMLNQHAKWLATSRELPWRRPIASLNYLLTSHVWRQDHNGASHQDPGFIDLVANKRAELTRVYLPPDGNTLLSVADHCLRSRDYINVIVAGKQPALAYLDMDAAIAHCTRGLGIWDWASTARSIGAEPDVVLACAGDIPTLETLAAADILRRELPDLAVRVVNVVDLMRLQPDSEHPHGLPDREFDALFTRDRPVIFAYHGYPWLIHRLTYRRANHAQLHVRGFKERGTTTTPFDMVMLNDLDRFHLVIDVLDRVEGLASRAAMLRQRMVDARLAARMYTREHGEDDPAIANWTWEPSERNSRSE.

This sequence belongs to the XFP family. Thiamine diphosphate serves as cofactor.

The protein is Probable phosphoketolase of Mycobacterium avium (strain 104).